The sequence spans 284 residues: Dihydropteroate synthase (284 aa).

One can recognise a Pterin-binding domain in the interval 6–265; it reads VQVIGVLNVT…DVRASVDALK (260 aa). N13 contacts Mg(2+). (7,8-dihydropterin-6-yl)methyl diphosphate contacts are provided by residues T53, D86, N105, D177, K213, and 253-255; that span reads RVH.

It belongs to the DHPS family. As to quaternary structure, homodimer. The cofactor is Mg(2+).

The enzyme catalyses (7,8-dihydropterin-6-yl)methyl diphosphate + 4-aminobenzoate = 7,8-dihydropteroate + diphosphate. It functions in the pathway cofactor biosynthesis; tetrahydrofolate biosynthesis; 7,8-dihydrofolate from 2-amino-4-hydroxy-6-hydroxymethyl-7,8-dihydropteridine diphosphate and 4-aminobenzoate: step 1/2. Is potently inhibited by the sulfone dapsone and the two sulfonamides sulfamethoxazole and sulfamethoxypyridazine, with Kis in the range of 12 to 32 nM. To a lesser extent, is also inhibited by p-aminosalicylate (PAS). Catalyzes the condensation of para-aminobenzoate (pABA) with 6-hydroxymethyl-7,8-dihydropterin diphosphate (DHPt-PP) to form 7,8-dihydropteroate, the immediate precursor of folate derivatives. The polypeptide is Dihydropteroate synthase (folP1) (Mycobacterium leprae (strain TN)).